The sequence spans 428 residues: Trigger factor (428 aa).

The PPIase FKBP-type domain occupies 163–248; that stretch reads GDMVVIDYKG…VHEIKEKELP (86 aa).

This sequence belongs to the FKBP-type PPIase family. Tig subfamily.

It is found in the cytoplasm. It carries out the reaction [protein]-peptidylproline (omega=180) = [protein]-peptidylproline (omega=0). Involved in protein export. Acts as a chaperone by maintaining the newly synthesized protein in an open conformation. Functions as a peptidyl-prolyl cis-trans isomerase. The chain is Trigger factor from Alkaliphilus metalliredigens (strain QYMF).